We begin with the raw amino-acid sequence, 340 residues long: Deubiquitinase SseL (340 aa).

The active site involves His223. Cys285 functions as the Nucleophile in the catalytic mechanism.

The protein belongs to the peptidase C79 family.

It is found in the secreted. The protein resides in the host cytoplasm. In terms of biological role, effector proteins function to alter host cell physiology and promote bacterial survival in host tissues. This protease targets the host cell ubiquitin pathway by acting as a deubiquitinase in infected host cells. This chain is Deubiquitinase SseL (sseL), found in Salmonella paratyphi A (strain ATCC 9150 / SARB42).